The sequence spans 332 residues: MKKLYDQYERLHDYVRISITDRCNLRCVYCMPKEGLPFFPTDRVLSQDEIVQLITNFAQLGVHKVRITGGEPLLRTDVVDIVRRIKEIDGIEDVSITTNGLFLAKKAKALKEAGLDRLNISLDTFKPEVYKEITRGGNINQVLDGIATASALHFKKIKLNIVLIRGQNDDELLDFINYTKDHDVNVRFIEFMPIGNSLEEWKQEYVALDSVFDLCKQAGLDYHPIDLAGNGPSDNYQVEGYTGSFGLIHPISSKFCENCNRLRITADGYIKACLYWNEEINVRKLIYDFDAFKAGVQRALDNKPLNHEMAMKTTDRIIDKAPTWRHMSQIGG.

The Radical SAM core domain maps to 7–221; it reads QYERLHDYVR…FDLCKQAGLD (215 aa). Arg-16 provides a ligand contact to GTP. Residues Cys-23 and Cys-27 each contribute to the [4Fe-4S] cluster site. Residue Tyr-29 participates in S-adenosyl-L-methionine binding. Residue Cys-30 participates in [4Fe-4S] cluster binding. Arg-66 is a GTP binding site. Gly-70 is an S-adenosyl-L-methionine binding site. A GTP-binding site is contributed by Thr-97. Ser-121 is a binding site for S-adenosyl-L-methionine. Lys-158 provides a ligand contact to GTP. Met-192 is an S-adenosyl-L-methionine binding site. [4Fe-4S] cluster contacts are provided by Cys-256 and Cys-259. Residue 261-263 participates in GTP binding; it reads RLR. Cys-273 provides a ligand contact to [4Fe-4S] cluster.

Belongs to the radical SAM superfamily. MoaA family. In terms of assembly, monomer and homodimer. [4Fe-4S] cluster serves as cofactor.

It catalyses the reaction GTP + AH2 + S-adenosyl-L-methionine = (8S)-3',8-cyclo-7,8-dihydroguanosine 5'-triphosphate + 5'-deoxyadenosine + L-methionine + A + H(+). It functions in the pathway cofactor biosynthesis; molybdopterin biosynthesis. Functionally, catalyzes the cyclization of GTP to (8S)-3',8-cyclo-7,8-dihydroguanosine 5'-triphosphate. The polypeptide is GTP 3',8-cyclase (Limosilactobacillus fermentum (strain NBRC 3956 / LMG 18251) (Lactobacillus fermentum)).